The primary structure comprises 128 residues: 3-aminoacrylate deaminase RutC (128 aa).

This sequence belongs to the RutC family.

The enzyme catalyses (Z)-3-aminoacrylate + H2O + H(+) = 3-oxopropanoate + NH4(+). Involved in pyrimidine catabolism. Catalyzes the deamination of 3-aminoacrylate to malonic semialdehyde, a reaction that can also occur spontaneously. RutC may facilitate the reaction and modulate the metabolic fitness, rather than catalyzing essential functions. The chain is 3-aminoacrylate deaminase RutC from Enterobacter sp. (strain 638).